We begin with the raw amino-acid sequence, 786 residues long: DNA double-strand break repair Rad50 ATPase (786 aa).

ATP contacts are provided by residues K13, N33–T39, and Q138. Coiled-coil stretches lie at residues L194–I249, E337–E455, and A551–L650. The Zinc-hook domain maps to E366–G459. Residues C411 and C414 each contribute to the Zn(2+) site.

It belongs to the SMC family. RAD50 subfamily. Homodimer. Forms a heterotetramer composed of two Mre11 subunits and two Rad50 subunits. The cofactor is Zn(2+).

In terms of biological role, part of the Rad50/Mre11 complex, which is involved in the early steps of DNA double-strand break (DSB) repair. The complex may facilitate opening of the processed DNA ends to aid in the recruitment of HerA and NurA. Rad50 controls the balance between DNA end bridging and DNA resection via ATP-dependent structural rearrangements of the Rad50/Mre11 complex. The sequence is that of DNA double-strand break repair Rad50 ATPase from Nanoarchaeum equitans (strain Kin4-M).